Reading from the N-terminus, the 98-residue chain is NADH-ubiquinone oxidoreductase chain 4L (98 aa).

3 consecutive transmembrane segments (helical) span residues 1–21 (MIPT…GMLT), 29–49 (SLLC…LIAL), and 61–81 (IILL…LVSI).

Belongs to the complex I subunit 4L family. In terms of assembly, core subunit of respiratory chain NADH dehydrogenase (Complex I) which is composed of 45 different subunits.

Its subcellular location is the mitochondrion inner membrane. It catalyses the reaction a ubiquinone + NADH + 5 H(+)(in) = a ubiquinol + NAD(+) + 4 H(+)(out). In terms of biological role, core subunit of the mitochondrial membrane respiratory chain NADH dehydrogenase (Complex I) which catalyzes electron transfer from NADH through the respiratory chain, using ubiquinone as an electron acceptor. Part of the enzyme membrane arm which is embedded in the lipid bilayer and involved in proton translocation. The protein is NADH-ubiquinone oxidoreductase chain 4L (MT-ND4L) of Macaca ochreata subsp. brunnescens (Muna-buton macaque).